The chain runs to 141 residues: Ribosome-binding factor A (141 aa).

The disordered stretch occupies residues 120 to 141 (DEALRAQSAGARPAGDEDPYKP).

Belongs to the RbfA family. In terms of assembly, monomer. Binds 30S ribosomal subunits, but not 50S ribosomal subunits or 70S ribosomes.

Its subcellular location is the cytoplasm. In terms of biological role, one of several proteins that assist in the late maturation steps of the functional core of the 30S ribosomal subunit. Associates with free 30S ribosomal subunits (but not with 30S subunits that are part of 70S ribosomes or polysomes). Required for efficient processing of 16S rRNA. May interact with the 5'-terminal helix region of 16S rRNA. This is Ribosome-binding factor A from Corynebacterium jeikeium (strain K411).